Consider the following 876-residue polypeptide: Valine--tRNA ligase (876 aa).

The short motif at 44–54 (PNVTGKLHLGH) is the 'HIGH' region element. The 'KMSKS' region signature appears at 520–524 (KMSKS). ATP is bound at residue lysine 523. Positions 805 to 876 (LEGLIDMDKE…VKARIEQLKA (72 aa)) form a coiled coil.

This sequence belongs to the class-I aminoacyl-tRNA synthetase family. ValS type 1 subfamily. As to quaternary structure, monomer.

The protein resides in the cytoplasm. It catalyses the reaction tRNA(Val) + L-valine + ATP = L-valyl-tRNA(Val) + AMP + diphosphate. In terms of biological role, catalyzes the attachment of valine to tRNA(Val). As ValRS can inadvertently accommodate and process structurally similar amino acids such as threonine, to avoid such errors, it has a 'posttransfer' editing activity that hydrolyzes mischarged Thr-tRNA(Val) in a tRNA-dependent manner. The polypeptide is Valine--tRNA ligase (Staphylococcus aureus (strain Mu3 / ATCC 700698)).